The following is an 86-amino-acid chain: Omega-theraphotoxin-Hhn1c (86 aa).

The first 21 residues, 1–21 (MKSIVFVALFGLALLAVVCSA), serve as a signal peptide directing secretion. The propeptide occupies 22-50 (SEDAHKELLKEVVRAMVVDKTDAVQAEER). Cystine bridges form between cysteine 52–cysteine 66, cysteine 59–cysteine 71, and cysteine 65–cysteine 78.

Belongs to the neurotoxin 10 (Hwtx-1) family. 17 (Hntx-9) subfamily. Expressed by the venom gland.

The protein resides in the secreted. Functionally, ion channel inhibitor. The polypeptide is Omega-theraphotoxin-Hhn1c (Cyriopagopus hainanus (Chinese bird spider)).